Here is a 154-residue protein sequence, read N- to C-terminus: MKRAKQVLYLVISLLVVIADQGLKNYIVTNFKIGDEHTVIPGILSFTYLQNDGAAWNIFSGQMILFYLISIAAIAVVVYYLFNPKYKNWLFDTGLALVLGGIIGNFIDRLHLKYVIDMLQLDFVQFNIFNIADSAITVGIVLVFIYLIFMSEKD.

Helical transmembrane passes span 7 to 27, 58 to 78, and 88 to 108; these read VLYLVISLLVVIADQGLKNYI, IFSGQMILFYLISIAAIAVVV, and NWLFDTGLALVLGGIIGNFID. Catalysis depends on residues D117 and D133. Residues 128 to 148 traverse the membrane as a helical segment; the sequence is IFNIADSAITVGIVLVFIYLI.

The protein belongs to the peptidase A8 family.

It is found in the cell membrane. The catalysed reaction is Release of signal peptides from bacterial membrane prolipoproteins. Hydrolyzes -Xaa-Yaa-Zaa-|-(S,diacylglyceryl)Cys-, in which Xaa is hydrophobic (preferably Leu), and Yaa (Ala or Ser) and Zaa (Gly or Ala) have small, neutral side chains.. It functions in the pathway protein modification; lipoprotein biosynthesis (signal peptide cleavage). Functionally, this protein specifically catalyzes the removal of signal peptides from prolipoproteins. This chain is Lipoprotein signal peptidase, found in Lactobacillus gasseri (strain ATCC 33323 / DSM 20243 / BCRC 14619 / CIP 102991 / JCM 1131 / KCTC 3163 / NCIMB 11718 / NCTC 13722 / AM63).